Consider the following 206-residue polypeptide: Oligoribonuclease (206 aa).

One can recognise an Exonuclease domain in the interval 20–183 (LVWLDMEMTG…ADIHESIDEL (164 aa)). Tyrosine 141 is an active-site residue.

This sequence belongs to the oligoribonuclease family.

It is found in the cytoplasm. In terms of biological role, 3'-to-5' exoribonuclease specific for small oligoribonucleotides. The polypeptide is Oligoribonuclease (Burkholderia ambifaria (strain ATCC BAA-244 / DSM 16087 / CCUG 44356 / LMG 19182 / AMMD) (Burkholderia cepacia (strain AMMD))).